Here is a 258-residue protein sequence, read N- to C-terminus: Flagellar L-ring protein (258 aa).

Residues 1 to 15 form the signal peptide; the sequence is MKRIVCLALFLSMTG. A lipid anchor (N-palmitoyl cysteine) is attached at cysteine 16. Cysteine 16 is lipidated: S-diacylglycerol cysteine.

Belongs to the FlgH family. In terms of assembly, the basal body constitutes a major portion of the flagellar organelle and consists of four rings (L,P,S, and M) mounted on a central rod.

Its subcellular location is the cell outer membrane. The protein resides in the bacterial flagellum basal body. In terms of biological role, assembles around the rod to form the L-ring and probably protects the motor/basal body from shearing forces during rotation. The sequence is that of Flagellar L-ring protein from Vibrio atlanticus (strain LGP32) (Vibrio splendidus (strain Mel32)).